The primary structure comprises 141 residues: MVHSQLPVAAPLRLLCALLLLPSATMIPGGLSPRSVTDPDVQKAAEFAVQEYNSLSTNAYYYKQLRIVEAQSQVVAGAKYYLTMELMKTKCAKATGKPKVYKEIQNCELPPKAQQEKLTCHFQVWSRPWLEKMELTKMSCN.

The N-terminal stretch at Met-1–Met-26 is a signal peptide. The 101-residue stretch at Gly-29–Trp-129 folds into the Cystatin domain. Positions Gln-73 to Gly-77 match the Secondary area of contact motif. 2 cysteine pairs are disulfide-bonded: Cys-91-Cys-107 and Cys-120-Cys-140.

Belongs to the cystatin family. As to expression, expressed at a low level by the venom gland (at protein level).

The protein resides in the secreted. Inhibits various C1 cysteine proteases including cathepsin L, papain and cathepsin B. This protein has no toxic activity and its function in the venom is unknown. It may play a role as a housekeeping or regulatory protein. The chain is Cystatin from Pseudonaja textilis (Eastern brown snake).